The primary structure comprises 146 residues: Leghemoglobin Lb120-29 (146 aa).

Residues 2 to 146 form the Globin domain; that stretch reads GFTDKQEALV…LASAIKKAMS (145 aa). Residues Y24 and Y29 each carry the nitrated tyrosine modification. Residue S44 participates in heme b binding. S44 is subject to Phosphoserine. O2 is bound at residue H61. Heme b-binding residues include K64, H93, and K96. Y134 is modified (nitrated tyrosine).

The protein belongs to the plant globin family. As to quaternary structure, monomer. Post-translationally, nitrated in effective nodules and particularly in hypoxic conditions; this mechanism may play a protective role in the symbiosis by buffering toxic peroxynitrite NO(2)(-). Nitration level decrease during nodule senescence. Phosphorylation at Ser-44 disrupts the molecular environment of its porphyrin ring oxygen binding pocket, thus leading to a reduced oxygen consumption and to the delivery of oxygen O(2) to symbiosomes. In terms of tissue distribution, root nodules.

The protein localises to the cytoplasm. The protein resides in the cytosol. Its subcellular location is the nucleus. Leghemoglobin that reversibly binds oxygen O(2) through a pentacoordinated heme iron. In root nodules, facilitates the diffusion of oxygen to the bacteroids while preventing the bacterial nitrogenase from being inactivated by buffering dioxygen, nitric oxide and carbon monoxide, and promoting the formation of reactive oxygen species (ROS, e.g. H(2)O(2)). This role is essential for symbiotic nitrogen fixation (SNF). The sequence is that of Leghemoglobin Lb120-29 from Pisum sativum (Garden pea).